The following is a 251-amino-acid chain: Metallo-beta-lactamase domain-containing protein 1 (251 aa).

7 residues coordinate Zn(2+): His-118, His-120, Asp-122, His-123, His-173, Asp-196, and His-235.

Belongs to the metallo-beta-lactamase superfamily. Glyoxalase II family. As to quaternary structure, homodimer. It depends on Zn(2+) as a cofactor.

Its subcellular location is the cytoplasm. The protein resides in the cytosol. It localises to the nucleus. The catalysed reaction is a ribonucleotidyl-ribonucleotide-RNA + H2O = a 3'-end ribonucleotide-RNA + a 5'-end 5'-phospho-ribonucleoside-RNA + H(+). Its function is as follows. Endoribonuclease that catalyzes the hydrolysis of histone-coding pre-mRNA 3'-end. Involved in histone pre-mRNA processing during the S-phase of the cell cycle, which is required for entering/progressing through S-phase. Cleaves histone pre-mRNA at a major and a minor cleavage site after the 5'-ACCCA-3' and the 5'-ACCCACA-3' sequence, respectively, and located downstream of the stem-loop. May require the presence of the HDE element located at the histone pre-RNA 3'-end to avoid non-specific cleavage. This is Metallo-beta-lactamase domain-containing protein 1 (Mblac1) from Rattus norvegicus (Rat).